The following is a 277-amino-acid chain: Translation initiation factor 2 subunit alpha (277 aa).

An S1 motif domain is found at 22 to 93; that stretch reads GEIVVGTVQE…KRGQVDVSLK (72 aa).

It belongs to the eIF-2-alpha family. In terms of assembly, heterotrimer composed of an alpha, a beta and a gamma chain.

In terms of biological role, eIF-2 functions in the early steps of protein synthesis by forming a ternary complex with GTP and initiator tRNA. The sequence is that of Translation initiation factor 2 subunit alpha (eif2a) from Aeropyrum pernix (strain ATCC 700893 / DSM 11879 / JCM 9820 / NBRC 100138 / K1).